A 414-amino-acid polypeptide reads, in one-letter code: Probable protein phosphatase 2C 80 (414 aa).

The 238-residue stretch at 174–411 (SCYLPHPEKE…DDITAVVSYV (238 aa)) folds into the PPM-type phosphatase domain. Mn(2+) contacts are provided by Asp-204, Gly-205, Asp-336, and Asp-402.

It belongs to the PP2C family. Mg(2+) serves as cofactor. Requires Mn(2+) as cofactor.

It carries out the reaction O-phospho-L-seryl-[protein] + H2O = L-seryl-[protein] + phosphate. It catalyses the reaction O-phospho-L-threonyl-[protein] + H2O = L-threonyl-[protein] + phosphate. This Arabidopsis thaliana (Mouse-ear cress) protein is Probable protein phosphatase 2C 80.